Consider the following 1024-residue polypeptide: Protein sumv-1 (1024 aa).

6 disordered regions span residues 447–486 (DASQ…KKMP), 501–564 (NFQG…RRGV), 577–617 (PSRH…RSQA), 645–664 (SQMA…GSPQ), 710–739 (VRSG…DTVQ), and 773–1024 (AGNS…EEEL). 3 stretches are compositionally biased toward polar residues: residues 467–486 (SFGT…KKMP), 501–514 (NFQG…SSAT), and 528–542 (RSQQ…QTQD). The segment covering 584 to 600 (SPLTPSTSTSSSQLLAP) has biased composition (low complexity). Residues 605–617 (QPGTSSQTFRSQA) show a composition bias toward polar residues. 2 stretches are compositionally biased toward low complexity: residues 710–730 (VRSG…ASGS) and 784–809 (AGAP…ASTS). The segment covering 810–832 (VPEPTKSSESSVDPQSDVSFSNP) has biased composition (polar residues). Residues 859–870 (TLASESTSSEAT) show a composition bias toward low complexity. A compositionally biased stretch (polar residues) spans 873 to 883 (HDTTSSSSAET). Over residues 903–914 (PEKEKEKIDRPK) the composition is skewed to basic and acidic residues. 3 stretches are compositionally biased toward low complexity: residues 916-943 (PKSS…NQAI), 952-962 (SASTSSSAAST), and 970-986 (LLAE…QQQA). Over residues 987-998 (IGSTSKNGGSTK) the composition is skewed to polar residues.

It is found in the nucleus. It localises to the cytoplasm. The protein localises to the cell projection. The protein resides in the axon. Functionally, nuclear factor that influences the activity of genes involved in vulval development. This chain is Protein sumv-1, found in Caenorhabditis elegans.